The following is a 24-amino-acid chain: Humanin-like 7 (24 aa).

Belongs to the humanin family. In terms of tissue distribution, expressed in testis.

It is found in the secreted. Its subcellular location is the cytoplasm. Functionally, plays a role as a neuroprotective and antiapoptotic factor. The polypeptide is Humanin-like 7 (Homo sapiens (Human)).